We begin with the raw amino-acid sequence, 255 residues long: Thiazole synthase (255 aa).

K96 serves as the catalytic Schiff-base intermediate with DXP. Residues G157, 183–184, and 205–206 each bind 1-deoxy-D-xylulose 5-phosphate; these read AG and NT.

This sequence belongs to the ThiG family. As to quaternary structure, homotetramer. Forms heterodimers with either ThiH or ThiS.

It localises to the cytoplasm. The enzyme catalyses [ThiS sulfur-carrier protein]-C-terminal-Gly-aminoethanethioate + 2-iminoacetate + 1-deoxy-D-xylulose 5-phosphate = [ThiS sulfur-carrier protein]-C-terminal Gly-Gly + 2-[(2R,5Z)-2-carboxy-4-methylthiazol-5(2H)-ylidene]ethyl phosphate + 2 H2O + H(+). It functions in the pathway cofactor biosynthesis; thiamine diphosphate biosynthesis. Functionally, catalyzes the rearrangement of 1-deoxy-D-xylulose 5-phosphate (DXP) to produce the thiazole phosphate moiety of thiamine. Sulfur is provided by the thiocarboxylate moiety of the carrier protein ThiS. In vitro, sulfur can be provided by H(2)S. This Geobacillus thermodenitrificans (strain NG80-2) protein is Thiazole synthase.